A 586-amino-acid polypeptide reads, in one-letter code: 2-succinyl-5-enolpyruvyl-6-hydroxy-3-cyclohexene-1-carboxylate synthase (586 aa).

This sequence belongs to the TPP enzyme family. MenD subfamily. As to quaternary structure, homodimer. Mg(2+) serves as cofactor. Requires Mn(2+) as cofactor. Thiamine diphosphate is required as a cofactor.

It catalyses the reaction isochorismate + 2-oxoglutarate + H(+) = 5-enolpyruvoyl-6-hydroxy-2-succinyl-cyclohex-3-ene-1-carboxylate + CO2. It participates in quinol/quinone metabolism; 1,4-dihydroxy-2-naphthoate biosynthesis; 1,4-dihydroxy-2-naphthoate from chorismate: step 2/7. Its pathway is cofactor biosynthesis; phylloquinone biosynthesis. Its function is as follows. Catalyzes the thiamine diphosphate-dependent decarboxylation of 2-oxoglutarate and the subsequent addition of the resulting succinic semialdehyde-thiamine pyrophosphate anion to isochorismate to yield 2-succinyl-5-enolpyruvyl-6-hydroxy-3-cyclohexene-1-carboxylate (SEPHCHC). The protein is 2-succinyl-5-enolpyruvyl-6-hydroxy-3-cyclohexene-1-carboxylate synthase of Acaryochloris marina (strain MBIC 11017).